An 848-amino-acid chain; its full sequence is AFGSMSVADLGSLTRLEDKIRLLQEDLESERELRNRIERERADLSVQLIALTDRLEDAEGTTDSQIESNRKREAELQKLRKLLEESQLENEDAMNVLRKKHQDACLDYAEQIEQLQKKNSKIDRERQRLQHEVIELTATIDQLQKDKHLAEKAAERFEAQTIELSNKVEDLNRHVNDLAQQRQRLQAENNDLLKEIHDQKVQLDNLQHVKYQLAQQLEEARRRLEDAERERSQLQAQLHQVQLELDSVRTALDEESAARAEAEHKLALANTEITQWKSKFDAEVALHHEEVEDLRKKMLQKQAEYEEQIEIMLQKISQLEKAKSRLQSEVEVLIVDLEKAQNTIAILERAKEQLEKTVNELKVRIDELTVELEAAQREARAALAELQKMKNLYEKAIEQKEALARENKKLQDDLHEAKEALADANRKLHELDLENARLAGEIRELQTALKESEAARRDAENRAQRALAELQQLRIEMERRLQEKEEEMEALRKNMQFEIDRLTAALADAEARMKAEISRLKKKYQAEIAELEMTVDNLNRANIEAQKTIKKQSEQLKILQASLEDTQRQLQQTLDQYALAQRKVSALSAELEECKVALDNAIRARKQAEIDLEEANARITDLVSINNNLTAIKNKLETELSTAQADLDEATKELHAADERANRALADAARAVEQLHEEQEHSMKIDALRKSLEEQVKQLQVQIQEAEAAALLGGKRVIAKLETRIRDLETALDEETRRHKETQGALRKKDRRIKEVQMQVDEEHKMFVMAQDTADRLLEKLNIQKWQLGEAESLTMANLQRVRRYQRELEDAEGRADQAESSLHLIRAKHRSSVVTGKNASASKIYVL.

Residues 1 to 9 are nonhelical region; that stretch reads AFGSMSVAD. Positions 10–833 form a coiled coil; the sequence is LGSLTRLEDK…HLIRAKHRSS (824 aa). The interval 834–848 is nonhelical region; it reads VVTGKNASASKIYVL.

It belongs to the paramyosin family. Homodimer.

It localises to the cytoplasm. Its subcellular location is the myofibril. Paramyosin is a major structural component of many thick filaments isolated from invertebrate muscles. The polypeptide is Paramyosin (Dirofilaria immitis (Canine heartworm)).